Consider the following 128-residue polypeptide: Large ribosomal subunit protein bL20c (128 aa).

The protein belongs to the bacterial ribosomal protein bL20 family.

It is found in the plastid. The protein localises to the chloroplast. Binds directly to 23S ribosomal RNA and is necessary for the in vitro assembly process of the 50S ribosomal subunit. It is not involved in the protein synthesizing functions of that subunit. The polypeptide is Large ribosomal subunit protein bL20c (Nicotiana sylvestris (Wood tobacco)).